Here is a 231-residue protein sequence, read N- to C-terminus: Response regulator Rre1 (231 aa).

One can recognise a Response regulatory domain in the interval 6-123; the sequence is SLLLVDDEPG…ELEAIVRNLL (118 aa). Asp56 is modified (4-aspartylphosphate). The 66-residue stretch at 163 to 228 folds into the HTH luxR-type domain; the sequence is PSPIKLDFTP…ELVRFALQHG (66 aa). A DNA-binding region (H-T-H motif) is located at residues 187–206; the sequence is NKEIAAQLKTSVRNVEKYVS.

Interacts with histidine kinase Hik2; may accept phosphate from Hik2.

In terms of biological role, member of at least 2 two-component regulatory systems Hik2/Rre1 and Hik34/Rre1. Responds to hyperosmotic stress, regulates expression of at least 24 genes including dnaK2 and hspA with Hik34 and sigB (sll0306), sll0528, slr1119, slr0852 and ssr3188 with Hik2. Responds to salt stress, regulates expression of at least 24 genes including adhA, dnaK2 and hspA with Hik34. Binds the adhA promoter. Phosphorylated by Hik2 in vitro. Phosphorylated protein has 10-fold higher affinity for DNA than unphosphorylated protein. This is Response regulator Rre1 from Synechocystis sp. (strain ATCC 27184 / PCC 6803 / Kazusa).